We begin with the raw amino-acid sequence, 910 residues long: MSRFFANGSDSESESSEDEIQATNFNKASAFQFSDDEEEVKRVVRSTKEKRYENLTSIIKTIRNHKKIKDIPNTLSSFEDLTRAYQKALPVISKEENGITPRFYIRCLAELEDFINEVWEDREGRKNLSKNNSKSLGTLRQKVRKYIKDFEDDLSRFREAPDQESEAEDEVVAQESDGGDAGDDSDAGVKPTEAAPKAVKSAPAKAAPADDDDSDDSIDWDSDSESETESSDDENQYQNMRERFLKRTTEKEEKDDDKRKDKRKEQKVKIRKRAEDDEDGEWETVVKGHVVEKPKMFEKDAEIDVPLVLAKLLEIMSARGKKRTDRRLQIDLLFELRDISDQHNLGTAVSVKIHFNIISAIYDYNQKISEPMKLEHWALLLEVMQSMLKLLLANTDIIMSESVAEEHEEYVTAPFYVRGCPLAAVERLDDEFVKLLKECDPHSNDYVSRLKDEVNVVKTIELVLQYFERSGTNNERCRIYLRKIEHLYYKFDPEVLKKKRNEVPATTSTSVDVMDKLCKFIYAKDDTDRIRTRAILAHIYHHAMHDNWFQARDLVLMSHLQDNIDAADPATRILYNRMMANLGLCAFRQENVKDAHHCLVDLMVTGKPKELLAQGLLPQRQHERSAEQEKIEKQRQMPFHMHINLELLECVYLVSAMLLEIPYIAAHEFDARRRMISKTFYQQLRSSERQSLVGPPESMREHVVAAAKAMRCGNWQACANFIVNKKMNTKVWDLFYESDRVREMLTKFIKEESLRTYLFTYSNVYTSISIPSLAQMYELPVPKVHSIISKMIINEELMASLDDPSETVVMHRSEPSRLQALAMQFVDKVTNLVDVNEKVFDMKQGNFFQRGNMGNRGDRGYNRNQNNQGGNWLGQRRDRNNRNRNQRGHHKNNQDRQQQQQQQVQTIDEE.

The disordered stretch occupies residues 1–21; the sequence is MSRFFANGSDSESESSEDEIQ. Residues 11-20 show a composition bias toward acidic residues; it reads SESESSEDEI. Ser-34, Ser-165, Ser-176, and Ser-185 each carry phosphoserine. The tract at residues 157–281 is disordered; the sequence is FREAPDQESE…KRAEDDEDGE (125 aa). The segment covering 162 to 186 has biased composition (acidic residues); sequence DQESEAEDEVVAQESDGGDAGDDSD. Residues 193 to 207 are compositionally biased toward low complexity; the sequence is EAAPKAVKSAPAKAA. The span at 209 to 235 shows a compositional bias: acidic residues; sequence ADDDDSDDSIDWDSDSESETESSDDEN. Basic and acidic residues predominate over residues 240–268; it reads MRERFLKRTTEKEEKDDDKRKDKRKEQKV. Residues 639 to 815 form the PCI domain; sequence FHMHINLELL…ETVVMHRSEP (177 aa). The tract at residues 847–910 is disordered; the sequence is FFQRGNMGNR…QQQVQTIDEE (64 aa). Residues 862-874 show a composition bias toward low complexity; it reads NRNQNNQGGNWLG. Basic residues predominate over residues 882–891; that stretch reads RNRNQRGHHK. A compositionally biased stretch (low complexity) spans 895-910; it reads DRQQQQQQQVQTIDEE.

The protein belongs to the eIF-3 subunit C family. In terms of assembly, component of the eukaryotic translation initiation factor 3 (eIF-3) complex. The eIF-3 complex interacts with pix.

The protein resides in the cytoplasm. Its function is as follows. Component of the eukaryotic translation initiation factor 3 (eIF-3) complex, which is involved in protein synthesis of a specialized repertoire of mRNAs and, together with other initiation factors, stimulates binding of mRNA and methionyl-tRNAi to the 40S ribosome. The eIF-3 complex specifically targets and initiates translation of a subset of mRNAs involved in cell proliferation. The protein is Eukaryotic translation initiation factor 3 subunit C of Drosophila yakuba (Fruit fly).